A 207-amino-acid chain; its full sequence is Large ribosomal subunit protein uL4 (207 aa).

A disordered region spans residues 49–78 (HAVKNRSAVSGGGRKPWRQKGTGRARQGSI).

The protein belongs to the universal ribosomal protein uL4 family. As to quaternary structure, part of the 50S ribosomal subunit.

One of the primary rRNA binding proteins, this protein initially binds near the 5'-end of the 23S rRNA. It is important during the early stages of 50S assembly. It makes multiple contacts with different domains of the 23S rRNA in the assembled 50S subunit and ribosome. In terms of biological role, forms part of the polypeptide exit tunnel. This chain is Large ribosomal subunit protein uL4, found in Streptococcus uberis (strain ATCC BAA-854 / 0140J).